Here is a 361-residue protein sequence, read N- to C-terminus: MDYPSKDVEFVTTGMFIIDEIEFDGGKKIKDIIGGAGSFALIGARLWTSEPESQQLGMIVDKGSDFPQVILDELNDLHTGIVYRETPWRKTTYGYNRLRDNGFRLFEYLTPKKPIRAPDLLETGLIYAKTIHIITNPKTFVSVCEELAKYGNLKNRPKIVWEPTPESCLPENWHILQKALKYCDIFSPNEVDSANLLGIDISESKSRAKEFVSAFQEFQIGHDSQGWVVLRNGSDGCLIGACTSSTNATSDAVVPVREILHLPSVQMKNGSVLDTTGAGNAFCGAAILEYYRTGNIIEACAKATVAASFVIQQHGLPAHTKNSEGIDLWNGESVFQRLKEYYEFLASHEASAIKELTKRGV.

This is an uncharacterized protein from Schizosaccharomyces pombe (strain 972 / ATCC 24843) (Fission yeast).